Reading from the N-terminus, the 938-residue chain is Bifunctional uridylyltransferase/uridylyl-removing enzyme (938 aa).

Residues 1–379 (MPPRLRPTHL…PGRAQKRKPL (379 aa)) are uridylyltransferase. Positions 380–733 (DEPGFHEVGG…GRIRSELNAA (354 aa)) are uridylyl-removing. The HD domain occupies 495 to 617 (VDEHTLRAVG…VQSPERLRLL (123 aa)). 2 ACT domains span residues 734 to 813 (EVVV…PVAR) and 845 to 924 (VVEA…TAQA).

Belongs to the GlnD family. Mg(2+) serves as cofactor.

The enzyme catalyses [protein-PII]-L-tyrosine + UTP = [protein-PII]-uridylyl-L-tyrosine + diphosphate. The catalysed reaction is [protein-PII]-uridylyl-L-tyrosine + H2O = [protein-PII]-L-tyrosine + UMP + H(+). Its activity is regulated as follows. Uridylyltransferase (UTase) activity is inhibited by glutamine, while glutamine activates uridylyl-removing (UR) activity. Functionally, modifies, by uridylylation and deuridylylation, the PII regulatory proteins (GlnB and homologs), in response to the nitrogen status of the cell that GlnD senses through the glutamine level. Under low glutamine levels, catalyzes the conversion of the PII proteins and UTP to PII-UMP and PPi, while under higher glutamine levels, GlnD hydrolyzes PII-UMP to PII and UMP (deuridylylation). Thus, controls uridylylation state and activity of the PII proteins, and plays an important role in the regulation of nitrogen assimilation and metabolism. In Phenylobacterium zucineum (strain HLK1), this protein is Bifunctional uridylyltransferase/uridylyl-removing enzyme.